The sequence spans 617 residues: Dihydroxy-acid dehydratase (617 aa).

Asp82 provides a ligand contact to Mg(2+). Cys123 contributes to the [2Fe-2S] cluster binding site. Mg(2+) contacts are provided by Asp124 and Lys125. Position 125 is an N6-carboxylysine (Lys125). Cys197 lines the [2Fe-2S] cluster pocket. Glu497 lines the Mg(2+) pocket. Ser523 (proton acceptor) is an active-site residue.

The protein belongs to the IlvD/Edd family. As to quaternary structure, homodimer. [2Fe-2S] cluster is required as a cofactor. Requires Mg(2+) as cofactor.

The enzyme catalyses (2R)-2,3-dihydroxy-3-methylbutanoate = 3-methyl-2-oxobutanoate + H2O. It catalyses the reaction (2R,3R)-2,3-dihydroxy-3-methylpentanoate = (S)-3-methyl-2-oxopentanoate + H2O. It participates in amino-acid biosynthesis; L-isoleucine biosynthesis; L-isoleucine from 2-oxobutanoate: step 3/4. The protein operates within amino-acid biosynthesis; L-valine biosynthesis; L-valine from pyruvate: step 3/4. Its function is as follows. Functions in the biosynthesis of branched-chain amino acids. Catalyzes the dehydration of (2R,3R)-2,3-dihydroxy-3-methylpentanoate (2,3-dihydroxy-3-methylvalerate) into 2-oxo-3-methylpentanoate (2-oxo-3-methylvalerate) and of (2R)-2,3-dihydroxy-3-methylbutanoate (2,3-dihydroxyisovalerate) into 2-oxo-3-methylbutanoate (2-oxoisovalerate), the penultimate precursor to L-isoleucine and L-valine, respectively. In Streptomyces coelicolor (strain ATCC BAA-471 / A3(2) / M145), this protein is Dihydroxy-acid dehydratase.